The sequence spans 3411 residues: Genome polyprotein (3411 aa).

The Cytoplasmic portion of the chain corresponds to 1–104; it reads MSGRKAQGKT…LSSRKRRSHD (104 aa). The hydrophobic; homodimerization of capsid protein C stretch occupies residues 38 to 72; that stretch reads PGPSRGVQGFIFFFLFNILTGKKITAHLKRLWKML. A propeptide spans 102-121 (ER anchor for the capsid protein C, removed in mature form by serine protease NS3); that stretch reads SHDVLTVQFLILGMLLMTGG. The chain crosses the membrane as a helical span at residues 105 to 125; that stretch reads VLTVQFLILGMLLMTGGVTLV. Topologically, residues 126 to 244 are extracellular; that stretch reads RKNRWLLLNV…GERQLQKIER (119 aa). Asn-134 and Asn-150 each carry an N-linked (GlcNAc...) asparagine; by host glycan. The chain crosses the membrane as a helical span at residues 245 to 265; that stretch reads WFVRNPFFAVTALTIAYLVGS. At 266 to 270 the chain is on the cytoplasmic side; that stretch reads NMTQR. The chain crosses the membrane as a helical span at residues 271–285; the sequence is VVIALLVLAVGPAYS. The Extracellular segment spans residues 286–730; it reads AHCIGITDRD…TVFGSAFQGL (445 aa). Cystine bridges form between Cys-288–Cys-315, Cys-345–Cys-401, Cys-345–Cys-406, Cys-359–Cys-390, Cys-377–Cys-401, Cys-377–Cys-406, Cys-467–Cys-568, and Cys-585–Cys-615. Positions 383 to 396 are fusion peptide; sequence DRGWGNGCGLFGKG. Residues 731–751 traverse the membrane as a helical segment; that stretch reads FGGLNWITKVIMGAVLIWVGI. Residues 752 to 757 lie on the Extracellular side of the membrane; the sequence is NTRNMT. The helical transmembrane segment at 758–778 threads the bilayer; sequence MSMSMILVGVIMMFLSLGVGA. The Extracellular portion of the chain corresponds to 779-1132; sequence DQGCAINFGK…LVRSWVTAGE (354 aa). 6 disulfides stabilise this stretch: Cys-782/Cys-793, Cys-833/Cys-921, Cys-957/Cys-1002, Cys-1058/Cys-1107, Cys-1069/Cys-1091, and Cys-1090/Cys-1094. Residues Asn-908 and Asn-986 are each glycosylated (N-linked (GlcNAc...) asparagine; by host). The chain crosses the membrane as a helical span at residues 1133-1153; sequence IHAVPFGLVSMMIAMEVVLRK. The Cytoplasmic portion of the chain corresponds to 1154–1201; the sequence is RQGPKQMLVGGVVLLGAMLVGQVTLLDLLKLTVAVGLHFHEMNNGGDA. The helical transmembrane segment at 1202–1222 threads the bilayer; sequence MYMALIAAFSIRPGLLIGFGL. Over 1223–1287 the chain is Lumenal; that stretch reads RTLWSPRERL…ILPLMALLTP (65 aa). A helical membrane pass occupies residues 1288-1308; that stretch reads VTMAEVRLAAMFFCAVVIIGV. At 1309-1355 the chain is on the cytoplasmic side; it reads LHQNFKDTSMQKTIPLVALTLTSYLGLTQPFLGLCAFLATRIFGRRS. The chain crosses the membrane as a helical span at residues 1356–1376; the sequence is IPVNEALAAAGLVGVLAGLAF. Over 1377 to 1378 the chain is Lumenal; it reads QE. Residues 1379–1399 form a helical membrane-spanning segment; the sequence is MENFLGPIAVGGLLMMLVSVA. The Cytoplasmic segment spans residues 1400 to 1456; it reads GRVDGLELKKLGEVSWEEEAEISGSSARYDVALSEQGEFKLLSEEKVPWDQVVMTSL. The tract at residues 1407–1446 is interacts with and activates NS3 protease; the sequence is LKKLGEVSWEEEAEISGSSARYDVALSEQGEFKLLSEEKV. The helical intramembrane region spans 1457 to 1477; the sequence is ALVGAALHPFALLLVLAGWLF. The Cytoplasmic portion of the chain corresponds to 1478–2157; it reads HVRGARRSGD…RNALSMMPEA (680 aa). One can recognise a Peptidase S7 domain in the interval 1485–1665; sequence SGDVLWDIPT…EVKEEGKEEL (181 aa). Residues His-1537, Asp-1561, and Ser-1622 each act as charge relay system; for serine protease NS3 activity in the active site. Residues 1669–1825 form the Helicase ATP-binding domain; sequence PTMLKKGMTT…HSNGEIEDVQ (157 aa). Residues 1673 to 1676 are important for RNA-binding; sequence KKGM. An ATP-binding site is contributed by 1682-1689; sequence FHPGAGKT. The short motif at 1773–1776 is the DEAH box element; that stretch reads DEAH. The 178-residue stretch at 1820 to 1997 folds into the Helicase C-terminal domain; that stretch reads EIEDVQTDIP…VRGGMVAPLY (178 aa). Lys-1877 is subject to N6-acetyllysine; by host. The helical transmembrane segment at 2158 to 2178 threads the bilayer; the sequence is MTIVMLFILAGLLTSGMVIFF. Over 2179–2186 the chain is Lumenal; that stretch reads MSPKGISR. The segment at residues 2187 to 2207 is an intramembrane region (helical); the sequence is MSMAMGTMAGCGYLMFLGGVK. The Lumenal portion of the chain corresponds to 2208 to 2209; it reads PT. A helical membrane pass occupies residues 2210–2230; sequence HISYVMLIFFVLMVVVIPEPG. Residues 2231 to 2241 lie on the Cytoplasmic side of the membrane; sequence QQRSIQDNQVA. A helical transmembrane segment spans residues 2242–2262; that stretch reads YLIIGILTLVSAVAANELGML. Residues 2263 to 2293 lie on the Lumenal side of the membrane; sequence EKTKEDLFGKKNLIPSSASPWSWPDLDLKPG. An intramembrane region (helical) is located at residues 2294–2314; it reads AAWTVYVGIVTMLSPMLHHWI. At 2315–2360 the chain is on the lumenal side; sequence KVEYGNLSLSGIAQSASVLSFMDKGIPFMKMNISVIMLLVSGWNSI. The chain crosses the membrane as a helical span at residues 2361 to 2381; it reads TVMPLLCGIGCAMLHWSLILP. The Cytoplasmic portion of the chain corresponds to 2382 to 2421; it reads GIKAQQSKLAQRRVFHGVAENPVVDGNPTVDIEEAPEMPA. The chain crosses the membrane as a helical span at residues 2422-2442; the sequence is LYEKKLALYLLLALSLASVAM. The Lumenal segment spans residues 2443 to 2445; sequence CRT. A helical membrane pass occupies residues 2446–2466; sequence PFSLAEGIVLASAALGPLIEG. At 2467–3411 the chain is on the cytoplasmic side; that stretch reads NTSLLWNGPM…DADLQLGELI (945 aa). In terms of domain architecture, mRNA cap 0-1 NS5-type MT spans 2507–2771; sequence GSANGKTLGE…DVILPIGTRS (265 aa). Ser-2562 is an S-adenosyl-L-methionine binding site. At Ser-2562 the chain carries Phosphoserine. The For 2'-O-MTase activity role is filled by Lys-2567. S-adenosyl-L-methionine-binding residues include Gly-2592, Trp-2593, Thr-2610, Leu-2611, Asp-2637, and Ile-2638. Asp-2652 acts as the For 2'-O-MTase activity in catalysis. An S-adenosyl-L-methionine-binding site is contributed by Ile-2653. Active-site for 2'-O-MTase activity residues include Lys-2688 and Glu-2724. Tyr-2726 contacts S-adenosyl-L-methionine. The Nuclear localization signal motif lies at 2878 to 2911; that stretch reads RKIMKVVNRWLFRHLAREKNPRLCTKEEFIAKVR. 4 residues coordinate Zn(2+): Glu-2945, His-2949, Cys-2954, and Cys-2957. Positions 3035-3187 constitute a RdRp catalytic domain; that stretch reads GGFYADDTAG…RPIDDRFGLA (153 aa). His-3222, Cys-3238, and Cys-3357 together coordinate Zn(2+).

It in the N-terminal section; belongs to the class I-like SAM-binding methyltransferase superfamily. mRNA cap 0-1 NS5-type methyltransferase family. In terms of assembly, homodimer. Interacts (via N-terminus) with host EXOC1 (via C-terminus); this interaction results in EXOC1 degradation through the proteasome degradation pathway. As to quaternary structure, forms heterodimers with envelope protein E in the endoplasmic reticulum and Golgi. Homodimer; in the endoplasmic reticulum and Golgi. Interacts with protein prM. Interacts with non-structural protein 1. In terms of assembly, homodimer; Homohexamer when secreted. Interacts with envelope protein E. As to quaternary structure, interacts (via N-terminus) with serine protease NS3. Forms a heterodimer with serine protease NS3. May form homooligomers. In terms of assembly, forms a heterodimer with NS2B. Interacts with non-structural protein 2A (via N-terminus). Interacts with NS4B. Interacts with unphosphorylated RNA-directed RNA polymerase NS5; this interaction stimulates RNA-directed RNA polymerase NS5 guanylyltransferase activity. NS3 interacts with host PDCD6IP; this interaction contributes to virion release. As to quaternary structure, interacts with serine protease NS3. Homodimer. Interacts with host STAT2; this interaction prevents the establishment of cellular antiviral state. Interacts with serine protease NS3. Interacts with host TRIM23; this interaction leads to NS5 ubiquitination. Specific enzymatic cleavages in vivo yield mature proteins. The nascent capsid protein C contains a C-terminal hydrophobic domain that act as a signal sequence for translocation of prM into the lumen of the ER. Mature capsid protein C is cleaved at a site upstream of this hydrophobic domain by NS3. prM is cleaved in post-Golgi vesicles by a host furin, releasing the mature small envelope protein M, and peptide pr. Non-structural protein 2A-alpha, a C-terminally truncated form of non-structural protein 2A, results from partial cleavage by NS3. Specific enzymatic cleavages in vivo yield mature proteins peptide 2K acts as a signal sequence and is removed from the N-terminus of NS4B by the host signal peptidase in the ER lumen. Signal cleavage at the 2K-4B site requires a prior NS3 protease-mediated cleavage at the 4A-2K site. In terms of processing, cleaved in post-Golgi vesicles by a host furin, releasing the mature small envelope protein M, and peptide pr. This cleavage is incomplete as up to 30% of viral particles still carry uncleaved prM. Post-translationally, N-glycosylated. N-glycosylated. The excreted form is glycosylated and this is required for efficient secretion of the protein from infected cells. In terms of processing, polyubiquitinated; ubiquitination is probably mediated by host TRIM23 and is prerequisite for NS5-STAT2 interaction. NS5 is not ISGylated or sumoylated. Post-translationally, acetylated by host KAT5. Acetylation modulates NS3 RNA-binding and unwinding activities and plays an important positive role for viral replication. Phosphorylated on serines residues. This phosphorylation may trigger NS5 nuclear localization.

It localises to the virion. The protein localises to the host nucleus. Its subcellular location is the host cytoplasm. It is found in the host perinuclear region. The protein resides in the secreted. It localises to the virion membrane. The protein localises to the host endoplasmic reticulum membrane. The catalysed reaction is Selective hydrolysis of -Xaa-Xaa-|-Yaa- bonds in which each of the Xaa can be either Arg or Lys and Yaa can be either Ser or Ala.. It catalyses the reaction RNA(n) + a ribonucleoside 5'-triphosphate = RNA(n+1) + diphosphate. It carries out the reaction a ribonucleoside 5'-triphosphate + H2O = a ribonucleoside 5'-diphosphate + phosphate + H(+). The enzyme catalyses ATP + H2O = ADP + phosphate + H(+). The catalysed reaction is a 5'-end (5'-triphosphoguanosine)-ribonucleoside in mRNA + S-adenosyl-L-methionine = a 5'-end (N(7)-methyl 5'-triphosphoguanosine)-ribonucleoside in mRNA + S-adenosyl-L-homocysteine. It catalyses the reaction a 5'-end (N(7)-methyl 5'-triphosphoguanosine)-ribonucleoside in mRNA + S-adenosyl-L-methionine = a 5'-end (N(7)-methyl 5'-triphosphoguanosine)-(2'-O-methyl-ribonucleoside) in mRNA + S-adenosyl-L-homocysteine + H(+). Plays a role in virus budding by binding to the cell membrane and gathering the viral RNA into a nucleocapsid that forms the core of a mature virus particle. During virus entry, may induce genome penetration into the host cytoplasm after hemifusion induced by the surface proteins. Can migrate to the cell nucleus where it modulates host functions. Functionally, inhibits RNA silencing by interfering with host Dicer. In terms of biological role, prevents premature fusion activity of envelope proteins in trans-Golgi by binding to envelope protein E at pH6.0. After virion release in extracellular space, gets dissociated from E dimers. Its function is as follows. Acts as a chaperone for envelope protein E during intracellular virion assembly by masking and inactivating envelope protein E fusion peptide. prM is the only viral peptide matured by host furin in the trans-Golgi network probably to avoid catastrophic activation of the viral fusion activity in acidic Golgi compartment prior to virion release. prM-E cleavage is inefficient, and many virions are only partially matured. These uncleaved prM would play a role in immune evasion. May play a role in virus budding. Exerts cytotoxic effects by activating a mitochondrial apoptotic pathway through M ectodomain. May display a viroporin activity. Functionally, binds to host cell surface receptor and mediates fusion between viral and cellular membranes. Envelope protein is synthesized in the endoplasmic reticulum in the form of heterodimer with protein prM. They play a role in virion budding in the ER, and the newly formed immature particle is covered with 60 spikes composed of heterodimer between precursor prM and envelope protein E. The virion is transported to the Golgi apparatus where the low pH causes dissociation of PrM-E heterodimers and formation of E homodimers. prM-E cleavage is inefficient, and many virions are only partially matured. These uncleaved prM would play a role in immune evasion. In terms of biological role, involved in immune evasion, pathogenesis and viral replication. Once cleaved off the polyprotein, is targeted to three destinations: the viral replication cycle, the plasma membrane and the extracellular compartment. Essential for viral replication. Required for formation of the replication complex and recruitment of other non-structural proteins to the ER-derived membrane structures. Excreted as a hexameric lipoparticle that plays a role against host immune response. Antagonizing the complement function. Binds to the host macrophages and dendritic cells. Inhibits signal transduction originating from Toll-like receptor 3 (TLR3). Its function is as follows. Component of the viral RNA replication complex that functions in virion assembly and antagonizes the host immune response. Required cofactor for the serine protease function of NS3. May have membrane-destabilizing activity and form viroporins. Functionally, displays three enzymatic activities: serine protease, NTPase and RNA helicase. NS3 serine protease, in association with NS2B, performs its autocleavage and cleaves the polyprotein at dibasic sites in the cytoplasm: C-prM, NS2A-NS2B, NS2B-NS3, NS3-NS4A, NS4A-2K and NS4B-NS5. NS3 RNA helicase binds RNA and unwinds dsRNA in the 3' to 5' direction. Also plays a role in virus assembly. In terms of biological role, regulates the ATPase activity of the NS3 helicase activity. NS4A allows NS3 helicase to conserve energy during unwinding. Its function is as follows. Functions as a signal peptide for NS4B and is required for the interferon antagonism activity of the latter. Induces the formation of ER-derived membrane vesicles where the viral replication takes place. Inhibits interferon (IFN)-induced host STAT1 phosphorylation and nuclear translocation, thereby preventing the establishment of cellular antiviral state by blocking the IFN-alpha/beta pathway. Functionally, replicates the viral (+) and (-) RNA genome, and performs the capping of genomes in the cytoplasm. NS5 methylates viral RNA cap at guanine N-7 and ribose 2'-O positions. Besides its role in RNA genome replication, also prevents the establishment of cellular antiviral state by blocking the interferon-alpha/beta (IFN-alpha/beta) signaling pathway. IFN-I induces binding of NS5 to host IFN-activated transcription factor STAT2, preventing its transcriptional activity. Host TRIM23 is the E3 ligase that interacts with and polyubiquitinates NS5 to promote its binding to STAT2 and trigger IFN-I signaling inhibition. The sequence is that of Genome polyprotein from Aedes aegypti (Yellowfever mosquito).